The sequence spans 157 residues: Large ribosomal subunit protein uL15 (157 aa).

The interval 1–41 is disordered; it reads MKLHELSDNPGATKKRKRVGRGPGSGTGKMGGRGIKGQKSR. The span at 21–35 shows a compositional bias: gly residues; sequence RGPGSGTGKMGGRGI.

Belongs to the universal ribosomal protein uL15 family. As to quaternary structure, part of the 50S ribosomal subunit.

In terms of biological role, binds to the 23S rRNA. This Jannaschia sp. (strain CCS1) protein is Large ribosomal subunit protein uL15.